A 167-amino-acid chain; its full sequence is Insertion element IS1 2 protein InsB (167 aa).

It belongs to the transposase 27 family.

Absolutely required for transposition of IS1. In Escherichia coli (strain K12), this protein is Insertion element IS1 2 protein InsB (insB2).